The primary structure comprises 452 residues: Bifunctional purine biosynthesis protein PurH (452 aa).

An MGS-like domain is found at 1–115 (MKRILVSLYE…KNWKKVKPAF (115 aa)).

The protein belongs to the PurH family.

The catalysed reaction is (6R)-10-formyltetrahydrofolate + 5-amino-1-(5-phospho-beta-D-ribosyl)imidazole-4-carboxamide = 5-formamido-1-(5-phospho-D-ribosyl)imidazole-4-carboxamide + (6S)-5,6,7,8-tetrahydrofolate. It catalyses the reaction IMP + H2O = 5-formamido-1-(5-phospho-D-ribosyl)imidazole-4-carboxamide. It participates in purine metabolism; IMP biosynthesis via de novo pathway; 5-formamido-1-(5-phospho-D-ribosyl)imidazole-4-carboxamide from 5-amino-1-(5-phospho-D-ribosyl)imidazole-4-carboxamide (10-formyl THF route): step 1/1. Its pathway is purine metabolism; IMP biosynthesis via de novo pathway; IMP from 5-formamido-1-(5-phospho-D-ribosyl)imidazole-4-carboxamide: step 1/1. The sequence is that of Bifunctional purine biosynthesis protein PurH from Thermotoga maritima (strain ATCC 43589 / DSM 3109 / JCM 10099 / NBRC 100826 / MSB8).